Here is a 239-residue protein sequence, read N- to C-terminus: Purine nucleoside phosphorylase DeoD-type (239 aa).

An a purine D-ribonucleoside-binding site is contributed by histidine 5. Phosphate is bound by residues glycine 21, arginine 25, arginine 44, and 88-91 (RVGS). A purine D-ribonucleoside-binding positions include 180–182 (EME) and 204–205 (SD). Aspartate 205 functions as the Proton donor in the catalytic mechanism.

This sequence belongs to the PNP/UDP phosphorylase family. As to quaternary structure, homohexamer; trimer of homodimers.

The enzyme catalyses a purine D-ribonucleoside + phosphate = a purine nucleobase + alpha-D-ribose 1-phosphate. The catalysed reaction is a purine 2'-deoxy-D-ribonucleoside + phosphate = a purine nucleobase + 2-deoxy-alpha-D-ribose 1-phosphate. In terms of biological role, catalyzes the reversible phosphorolytic breakdown of the N-glycosidic bond in the beta-(deoxy)ribonucleoside molecules, with the formation of the corresponding free purine bases and pentose-1-phosphate. The chain is Purine nucleoside phosphorylase DeoD-type from Salmonella arizonae (strain ATCC BAA-731 / CDC346-86 / RSK2980).